The primary structure comprises 40 residues: Ribosome-inactivating protein saporin-1 (40 aa).

It belongs to the ribosome-inactivating protein family. Type 1 RIP subfamily.

The catalysed reaction is Endohydrolysis of the N-glycosidic bond at one specific adenosine on the 28S rRNA.. In terms of biological role, ribosome-inactivating protein of type 1, inhibits protein synthesis in animal cells. In Saponaria officinalis (Common soapwort), this protein is Ribosome-inactivating protein saporin-1 (SAP1).